The chain runs to 196 residues: Pyridoxal 5'-phosphate synthase subunit PdxT (196 aa).

46–48 (GES) contacts L-glutamine. Cys-78 acts as the Nucleophile in catalysis. L-glutamine contacts are provided by residues Arg-105 and 133-134 (IR). Catalysis depends on charge relay system residues His-169 and Glu-171.

It belongs to the glutaminase PdxT/SNO family. In terms of assembly, in the presence of PdxS, forms a dodecamer of heterodimers. Only shows activity in the heterodimer.

The catalysed reaction is aldehydo-D-ribose 5-phosphate + D-glyceraldehyde 3-phosphate + L-glutamine = pyridoxal 5'-phosphate + L-glutamate + phosphate + 3 H2O + H(+). It carries out the reaction L-glutamine + H2O = L-glutamate + NH4(+). The protein operates within cofactor biosynthesis; pyridoxal 5'-phosphate biosynthesis. Catalyzes the hydrolysis of glutamine to glutamate and ammonia as part of the biosynthesis of pyridoxal 5'-phosphate. The resulting ammonia molecule is channeled to the active site of PdxS. The chain is Pyridoxal 5'-phosphate synthase subunit PdxT from Geobacillus kaustophilus (strain HTA426).